The chain runs to 291 residues: Glucose and ribitol dehydrogenase (291 aa).

A disordered region spans residues 1-35 (MASGGQFPPQKQESQPGKEHLMDPSPQHASPHYKP). 45–69 (LVTGGDSGIGRSVCYHFALEGATVA) lines the NAD(+) pocket. Substrate is bound at residue serine 183. The active-site Proton acceptor is the tyrosine 196.

It belongs to the short-chain dehydrogenases/reductases (SDR) family. As to expression, expressed in embryogenic cells, somatic embryos and seeds in the later stages of development, but not in non-embryogenic cells and mature leaves.

In terms of biological role, may act as a short alcohol-polyol-sugar dehydrogenase possibly related to carbohydrate metabolism and the acquisition of desiccation tolerance. May also be involved in signal transduction. The chain is Glucose and ribitol dehydrogenase (CAISE5) from Daucus carota (Wild carrot).